The chain runs to 196 residues: Ribonuclease HII (196 aa).

The region spanning 9–196 (SLIAGVDEVG…APVKRAIGLK (188 aa)) is the RNase H type-2 domain. 3 residues coordinate a divalent metal cation: Asp-15, Glu-16, and Asp-107.

Belongs to the RNase HII family. Mn(2+) is required as a cofactor. Requires Mg(2+) as cofactor.

Its subcellular location is the cytoplasm. The catalysed reaction is Endonucleolytic cleavage to 5'-phosphomonoester.. Functionally, endonuclease that specifically degrades the RNA of RNA-DNA hybrids. The sequence is that of Ribonuclease HII from Photorhabdus laumondii subsp. laumondii (strain DSM 15139 / CIP 105565 / TT01) (Photorhabdus luminescens subsp. laumondii).